We begin with the raw amino-acid sequence, 286 residues long: ATP-binding protein ChvD (286 aa).

Residues 21 to 85 (KLQDMIDSQN…DLLLLDEPTN (65 aa)) enclose the ABC transporter domain.

This sequence belongs to the ABC transporter superfamily.

Functionally, the induction of virG by growth under acidic conditions and by phosphate starvation, in the absence of plant inducers, is influenced by ChvD. The sequence is that of ATP-binding protein ChvD (chvD) from Rhizobium radiobacter (Agrobacterium tumefaciens).